The following is an 836-amino-acid chain: Probable ribonuclease ZC3H12B (836 aa).

Residues 1 to 92 form a disordered region; that stretch reads MTATAEVETP…SPCLDRPSFS (92 aa). Over residues 8–28 the composition is skewed to basic and acidic residues; it reads ETPKMEKSASKEEKQQPKQDS. Residues 35–46 are compositionally biased toward acidic residues; the sequence is DSEEWMSSESDP. Positions 50–60 are enriched in polar residues; that stretch reads SLKSSDNSKSC. The segment covering 70–80 has biased composition (basic residues); the sequence is KEMHSKPHRQL. The region spanning 190–345 is the RNase NYN domain; the sequence is LRPVVIDGSN…LGRHGPSLEN (156 aa). The segment at 355 to 380 adopts a C3H1-type zinc-finger fold; the sequence is EHKKQPCPYGKKCTYGHKCKYYHPER.

It belongs to the ZC3H12 family. It depends on Mg(2+) as a cofactor.

In terms of biological role, may function as RNase and regulate the levels of target RNA species. This Homo sapiens (Human) protein is Probable ribonuclease ZC3H12B (ZC3H12B).